We begin with the raw amino-acid sequence, 487 residues long: N-succinylglutamate 5-semialdehyde dehydrogenase (487 aa).

221–226 (GSSDTG) serves as a coordination point for NAD(+). Catalysis depends on residues E244 and C278.

The protein belongs to the aldehyde dehydrogenase family. AstD subfamily.

It carries out the reaction N-succinyl-L-glutamate 5-semialdehyde + NAD(+) + H2O = N-succinyl-L-glutamate + NADH + 2 H(+). It participates in amino-acid degradation; L-arginine degradation via AST pathway; L-glutamate and succinate from L-arginine: step 4/5. Its function is as follows. Catalyzes the NAD-dependent reduction of succinylglutamate semialdehyde into succinylglutamate. The protein is N-succinylglutamate 5-semialdehyde dehydrogenase of Burkholderia ambifaria (strain MC40-6).